Consider the following 732-residue polypeptide: Aldehyde oxidoreductase molybdenum-binding subunit PaoC (732 aa).

Mo-molybdopterin cytosine dinucleotide is bound by residues 241 to 242, 468 to 470, 511 to 512, 615 to 621, Gln625, and 688 to 691; these read GF, IGT, GA, RILNPKT, and KGVG. Glu692 (proton acceptor) is an active-site residue.

It belongs to the xanthine dehydrogenase family. In terms of assembly, heterotrimer composed of PaoA, PaoB and PaoC. Requires Mo-molybdopterin cytosine dinucleotide as cofactor.

It localises to the periplasm. The catalysed reaction is an aldehyde + A + H2O = a carboxylate + AH2 + H(+). Its activity is regulated as follows. The complex requires PaoD for activity. Oxidizes aldehydes to the corresponding carboxylic acids with a preference for aromatic aldehydes. It might play a role in the detoxification of aldehydes to avoid cell damage. This chain is Aldehyde oxidoreductase molybdenum-binding subunit PaoC, found in Escherichia coli (strain K12).